The following is a 303-amino-acid chain: Lipoyl synthase (303 aa).

Positions 35, 40, 46, 61, 65, 68, and 273 each coordinate [4Fe-4S] cluster. Positions 47 to 262 constitute a Radical SAM core domain; it reads FRERQATFLI…KELAEKMGFR (216 aa).

Belongs to the radical SAM superfamily. Lipoyl synthase family. The cofactor is [4Fe-4S] cluster.

It is found in the cytoplasm. It carries out the reaction [[Fe-S] cluster scaffold protein carrying a second [4Fe-4S](2+) cluster] + N(6)-octanoyl-L-lysyl-[protein] + 2 oxidized [2Fe-2S]-[ferredoxin] + 2 S-adenosyl-L-methionine + 4 H(+) = [[Fe-S] cluster scaffold protein] + N(6)-[(R)-dihydrolipoyl]-L-lysyl-[protein] + 4 Fe(3+) + 2 hydrogen sulfide + 2 5'-deoxyadenosine + 2 L-methionine + 2 reduced [2Fe-2S]-[ferredoxin]. Its pathway is protein modification; protein lipoylation via endogenous pathway; protein N(6)-(lipoyl)lysine from octanoyl-[acyl-carrier-protein]: step 2/2. Its function is as follows. Catalyzes the radical-mediated insertion of two sulfur atoms into the C-6 and C-8 positions of the octanoyl moiety bound to the lipoyl domains of lipoate-dependent enzymes, thereby converting the octanoylated domains into lipoylated derivatives. In Geobacter sulfurreducens (strain ATCC 51573 / DSM 12127 / PCA), this protein is Lipoyl synthase.